Here is a 567-residue protein sequence, read N- to C-terminus: PCNA-interacting partner (567 aa).

The tract at residues 485-552 (IDLKTAEQVK…GVSRNKASKN (68 aa)) is disordered. Polar residues-rich tracts occupy residues 512–524 (DIQSETTNGQENE) and 534–552 (LTSSKANKQGVSRNKASKN).

The protein belongs to the PARI family.

The protein localises to the cytoplasm. It is found in the nucleus. In terms of biological role, required to suppress inappropriate homologous recombination, thereby playing a central role DNA repair and in the maintenance of genomic stability. This Xenopus laevis (African clawed frog) protein is PCNA-interacting partner (parpbp).